We begin with the raw amino-acid sequence, 147 residues long: Large ribosomal subunit protein uL13 (147 aa).

Belongs to the universal ribosomal protein uL13 family. Part of the 50S ribosomal subunit.

In terms of biological role, this protein is one of the early assembly proteins of the 50S ribosomal subunit, although it is not seen to bind rRNA by itself. It is important during the early stages of 50S assembly. This Kocuria rhizophila (strain ATCC 9341 / DSM 348 / NBRC 103217 / DC2201) protein is Large ribosomal subunit protein uL13.